A 346-amino-acid chain; its full sequence is MTDKTSLSYKDAGVDIDAGNALVDRIKGVVKKTRRPEVMGGLGGFGALCALPQKYREPILVSGTDGVGTKLRLAMDLKRHDAIGIDLVAMCVNDLVVSGAEPLFFLDYYATGKLDVDTAASVITGIAEGCSQSGCALVGGETAEMPGMYHGEDYDVAGFCVGVVEKSEIIDGSKVAEGDVLIALGSSGPHSNGYSLVRKILAFSNTDPETTQLEGKPLADHLLAPTRIYVKNILSLIEQVDVHAIAHLTGGGFWENIPRVLPDNTQAVLDESSWEWPAVFGWMQQAGNVSRFEMYRTFNCGVGMVIALSAADADKALRLMNDAGEKAWKIGVIKASDSEERVVINA.

It belongs to the AIR synthase family.

Its subcellular location is the cytoplasm. The catalysed reaction is 2-formamido-N(1)-(5-O-phospho-beta-D-ribosyl)acetamidine + ATP = 5-amino-1-(5-phospho-beta-D-ribosyl)imidazole + ADP + phosphate + H(+). It functions in the pathway purine metabolism; IMP biosynthesis via de novo pathway; 5-amino-1-(5-phospho-D-ribosyl)imidazole from N(2)-formyl-N(1)-(5-phospho-D-ribosyl)glycinamide: step 2/2. The chain is Phosphoribosylformylglycinamidine cyclo-ligase from Erwinia tasmaniensis (strain DSM 17950 / CFBP 7177 / CIP 109463 / NCPPB 4357 / Et1/99).